We begin with the raw amino-acid sequence, 1235 residues long: Phosphorylase b kinase regulatory subunit alpha, liver isoform (1235 aa).

A phosphoserine mark is found at serine 697, serine 731, and serine 737. Residues 808 to 838 (LSELYGKAGLNQEWGLIRYISGLLRKKVEVL) form a calmodulin-binding region. Residues 976-986 (SSASSPAISIH) are compositionally biased toward low complexity. Positions 976–1002 (SSASSPAISIHEVGHTGVTKTERSGIN) are disordered. Phosphoserine is present on residues serine 984, serine 1016, and serine 1044. A compositionally biased stretch (low complexity) spans 1032–1053 (AYSKSVRSSTPSSPTGTSSSDS). Positions 1032 to 1060 (AYSKSVRSSTPSSPTGTSSSDSGGHHISW) are disordered. A calmodulin-binding region spans residues 1059-1099 (SWGERQGQWLRRRRLDGAINRVPVGFYQRVWKILQKCHGLS). The S-farnesyl cysteine moiety is linked to residue cysteine 1232.

The protein belongs to the phosphorylase b kinase regulatory chain family. Hexadecamer of 4 heterotetramers, each composed of alpha, beta, gamma, and delta subunits. Alpha (PHKA1 or PHKA2) and beta (PHKB) are regulatory subunits, gamma (PHKG1 or PHKG2) is the catalytic subunit, and delta is calmodulin. Although the final Cys may be farnesylated, the terminal tripeptide is probably not removed, and the C-terminus is not methylated. As to expression, predominantly expressed in liver and other non-muscle tissues.

The protein resides in the cell membrane. It functions in the pathway glycan biosynthesis; glycogen metabolism. By phosphorylation of various serine residues and by calcium. Its function is as follows. Phosphorylase b kinase catalyzes the phosphorylation of serine in certain substrates, including troponin I. The alpha chain may bind calmodulin. In Oryctolagus cuniculus (Rabbit), this protein is Phosphorylase b kinase regulatory subunit alpha, liver isoform (PHKA2).